We begin with the raw amino-acid sequence, 404 residues long: Probable tRNA sulfurtransferase (404 aa).

The THUMP domain occupies 60–165; sequence QPIVEALKLV…DEAAYISYEE (106 aa). Residues 183–184, 208–209, Arg265, Gly287, and Gln296 contribute to the ATP site; these read ML and HF.

Belongs to the ThiI family.

The protein localises to the cytoplasm. It carries out the reaction [ThiI sulfur-carrier protein]-S-sulfanyl-L-cysteine + a uridine in tRNA + 2 reduced [2Fe-2S]-[ferredoxin] + ATP + H(+) = [ThiI sulfur-carrier protein]-L-cysteine + a 4-thiouridine in tRNA + 2 oxidized [2Fe-2S]-[ferredoxin] + AMP + diphosphate. The catalysed reaction is [ThiS sulfur-carrier protein]-C-terminal Gly-Gly-AMP + S-sulfanyl-L-cysteinyl-[cysteine desulfurase] + AH2 = [ThiS sulfur-carrier protein]-C-terminal-Gly-aminoethanethioate + L-cysteinyl-[cysteine desulfurase] + A + AMP + 2 H(+). Its pathway is cofactor biosynthesis; thiamine diphosphate biosynthesis. In terms of biological role, catalyzes the ATP-dependent transfer of a sulfur to tRNA to produce 4-thiouridine in position 8 of tRNAs, which functions as a near-UV photosensor. Also catalyzes the transfer of sulfur to the sulfur carrier protein ThiS, forming ThiS-thiocarboxylate. This is a step in the synthesis of thiazole, in the thiamine biosynthesis pathway. The sulfur is donated as persulfide by IscS. This Streptococcus pyogenes serotype M12 (strain MGAS2096) protein is Probable tRNA sulfurtransferase.